A 322-amino-acid chain; its full sequence is Ribose-phosphate pyrophosphokinase (322 aa).

Residues D43–E45 and R102–Q103 contribute to the ATP site. H137 and D177 together coordinate Mg(2+). Residue K201 is part of the active site. Residues R203, D227, and D231–T235 contribute to the D-ribose 5-phosphate site.

Belongs to the ribose-phosphate pyrophosphokinase family. Class I subfamily. As to quaternary structure, homohexamer. Requires Mg(2+) as cofactor.

Its subcellular location is the cytoplasm. It carries out the reaction D-ribose 5-phosphate + ATP = 5-phospho-alpha-D-ribose 1-diphosphate + AMP + H(+). The protein operates within metabolic intermediate biosynthesis; 5-phospho-alpha-D-ribose 1-diphosphate biosynthesis; 5-phospho-alpha-D-ribose 1-diphosphate from D-ribose 5-phosphate (route I): step 1/1. Involved in the biosynthesis of the central metabolite phospho-alpha-D-ribosyl-1-pyrophosphate (PRPP) via the transfer of pyrophosphoryl group from ATP to 1-hydroxyl of ribose-5-phosphate (Rib-5-P). The sequence is that of Ribose-phosphate pyrophosphokinase from Xylella fastidiosa (strain 9a5c).